A 474-amino-acid polypeptide reads, in one-letter code: tRNA-2-methylthio-N(6)-dimethylallyladenosine synthase (474 aa).

An MTTase N-terminal domain is found at 3–120; the sequence is KKLHIKTWGC…LPEMINQVKG (118 aa). 6 residues coordinate [4Fe-4S] cluster: Cys-12, Cys-49, Cys-83, Cys-157, Cys-161, and Cys-164. The Radical SAM core domain maps to 143–375; sequence RAEGPTAFVS…QERINQQAMA (233 aa). The TRAM domain occupies 378-441; the sequence is RRMLGTTQRI…PNSLRGKVIR (64 aa).

This sequence belongs to the methylthiotransferase family. MiaB subfamily. In terms of assembly, monomer. [4Fe-4S] cluster serves as cofactor.

It localises to the cytoplasm. It carries out the reaction N(6)-dimethylallyladenosine(37) in tRNA + (sulfur carrier)-SH + AH2 + 2 S-adenosyl-L-methionine = 2-methylsulfanyl-N(6)-dimethylallyladenosine(37) in tRNA + (sulfur carrier)-H + 5'-deoxyadenosine + L-methionine + A + S-adenosyl-L-homocysteine + 2 H(+). In terms of biological role, catalyzes the methylthiolation of N6-(dimethylallyl)adenosine (i(6)A), leading to the formation of 2-methylthio-N6-(dimethylallyl)adenosine (ms(2)i(6)A) at position 37 in tRNAs that read codons beginning with uridine. The polypeptide is tRNA-2-methylthio-N(6)-dimethylallyladenosine synthase (Cronobacter sakazakii (strain ATCC BAA-894) (Enterobacter sakazakii)).